We begin with the raw amino-acid sequence, 34 residues long: Photosystem I reaction center subunit XII (34 aa).

Residues 9–29 form a helical membrane-spanning segment; the sequence is LIALSLIVVVHAGVLALRLGI.

This sequence belongs to the PsaM family.

The protein localises to the cellular thylakoid membrane. This chain is Photosystem I reaction center subunit XII, found in Prochlorococcus marinus (strain MIT 9312).